Consider the following 358-residue polypeptide: Methionine aminopeptidase 2 (358 aa).

His-111 is a substrate binding site. A divalent metal cation-binding residues include Asp-131, Asp-142, and His-211. A substrate-binding site is contributed by His-219. A divalent metal cation is bound by residues Glu-244 and Glu-339.

Belongs to the peptidase M24A family. Methionine aminopeptidase eukaryotic type 2 subfamily. Requires Co(2+) as cofactor. The cofactor is Zn(2+). Mn(2+) serves as cofactor. It depends on Fe(2+) as a cofactor.

The protein localises to the cytoplasm. The catalysed reaction is Release of N-terminal amino acids, preferentially methionine, from peptides and arylamides.. Cotranslationally removes the N-terminal methionine from nascent proteins. The N-terminal methionine is often cleaved when the second residue in the primary sequence is small and uncharged (Met-Ala-, Cys, Gly, Pro, Ser, Thr, or Val). The protein is Methionine aminopeptidase 2 of Laccaria bicolor (strain S238N-H82 / ATCC MYA-4686) (Bicoloured deceiver).